A 190-amino-acid chain; its full sequence is Xanthine phosphoribosyltransferase (190 aa).

The xanthine site is built by Leu20 and Asn27. Ala128–Ala132 provides a ligand contact to 5-phospho-alpha-D-ribose 1-diphosphate. Residue Lys156 participates in xanthine binding.

This sequence belongs to the purine/pyrimidine phosphoribosyltransferase family. Xpt subfamily. Homodimer.

The protein resides in the cytoplasm. The enzyme catalyses XMP + diphosphate = xanthine + 5-phospho-alpha-D-ribose 1-diphosphate. Its pathway is purine metabolism; XMP biosynthesis via salvage pathway; XMP from xanthine: step 1/1. Its function is as follows. Converts the preformed base xanthine, a product of nucleic acid breakdown, to xanthosine 5'-monophosphate (XMP), so it can be reused for RNA or DNA synthesis. This Pseudomonas paraeruginosa (strain DSM 24068 / PA7) (Pseudomonas aeruginosa (strain PA7)) protein is Xanthine phosphoribosyltransferase.